The sequence spans 301 residues: Lipoyl synthase (301 aa).

7 residues coordinate [4Fe-4S] cluster: C50, C55, C61, C76, C80, C83, and S289. The 217-residue stretch at 62–278 (WNHRTATFLL…RRYALERGFR (217 aa)) folds into the Radical SAM core domain.

This sequence belongs to the radical SAM superfamily. Lipoyl synthase family. Requires [4Fe-4S] cluster as cofactor.

It localises to the cytoplasm. The enzyme catalyses [[Fe-S] cluster scaffold protein carrying a second [4Fe-4S](2+) cluster] + N(6)-octanoyl-L-lysyl-[protein] + 2 oxidized [2Fe-2S]-[ferredoxin] + 2 S-adenosyl-L-methionine + 4 H(+) = [[Fe-S] cluster scaffold protein] + N(6)-[(R)-dihydrolipoyl]-L-lysyl-[protein] + 4 Fe(3+) + 2 hydrogen sulfide + 2 5'-deoxyadenosine + 2 L-methionine + 2 reduced [2Fe-2S]-[ferredoxin]. The protein operates within protein modification; protein lipoylation via endogenous pathway; protein N(6)-(lipoyl)lysine from octanoyl-[acyl-carrier-protein]: step 2/2. Functionally, catalyzes the radical-mediated insertion of two sulfur atoms into the C-6 and C-8 positions of the octanoyl moiety bound to the lipoyl domains of lipoate-dependent enzymes, thereby converting the octanoylated domains into lipoylated derivatives. In Roseiflexus sp. (strain RS-1), this protein is Lipoyl synthase.